The chain runs to 223 residues: Deoxyribose-phosphate aldolase 2 (223 aa).

Residue Asp-92 is the Proton donor/acceptor of the active site. Lys-154 acts as the Schiff-base intermediate with acetaldehyde in catalysis. The active-site Proton donor/acceptor is the Lys-183.

This sequence belongs to the DeoC/FbaB aldolase family. DeoC type 1 subfamily.

The protein localises to the cytoplasm. The enzyme catalyses 2-deoxy-D-ribose 5-phosphate = D-glyceraldehyde 3-phosphate + acetaldehyde. It participates in carbohydrate degradation; 2-deoxy-D-ribose 1-phosphate degradation; D-glyceraldehyde 3-phosphate and acetaldehyde from 2-deoxy-alpha-D-ribose 1-phosphate: step 2/2. Functionally, catalyzes a reversible aldol reaction between acetaldehyde and D-glyceraldehyde 3-phosphate to generate 2-deoxy-D-ribose 5-phosphate. The polypeptide is Deoxyribose-phosphate aldolase 2 (Oceanobacillus iheyensis (strain DSM 14371 / CIP 107618 / JCM 11309 / KCTC 3954 / HTE831)).